A 531-amino-acid chain; its full sequence is Multidrug resistance protein fnx1 (531 aa).

The Cytoplasmic segment spans residues 1–30 (MVDQVNLATEQTSLLYPEVSRKKEELSVNK). Residues 31–51 (WTILPALWVGGFLSALDMTIV) form a helical membrane-spanning segment. The Lumenal portion of the chain corresponds to 52 to 225 (ASLYPVIGSE…NASLLSRIDY (174 aa)). Residues 226–246 (LGSFLLVTGITALVVTFNMGG) traverse the membrane as a helical segment. Residues 247–252 (DAFPWV) lie on the Cytoplasmic side of the membrane. Residues 253–273 (SPVIITLLVSSVLILFAFYWV) form a helical membrane-spanning segment. Residues 274-297 (EKNIAVEPIAPVEILSQPTPLNVC) lie on the Lumenal side of the membrane. The helical transmembrane segment at 298-318 (LGNFFNAFCSFVIVYELPLFF) threads the bilayer. Residues 319 to 360 (ETTLLMPSSEAGVRIFPYVISTSVGSLCSGLYMKKTGRYRNL) lie on the Cytoplasmic side of the membrane. A helical transmembrane segment spans residues 361-381 (VIAGFFFMLMGIVSFAVLTSF). At 382-385 (GHRT) the chain is on the lumenal side. The helical transmembrane segment at 386-406 (PLILISLCLAMTGCSYGMNLT) threads the bilayer. Over 407 to 496 (STLIAIISSL…QKLVIKSYAT (90 aa)) the chain is Cytoplasmic. A helical transmembrane segment spans residues 497–517 (AFTWTFALVAIIAFAGFWCSL). Residues 518 to 531 (RIKQFYLHTSVDRS) are Lumenal-facing.

It belongs to the major facilitator superfamily.

The protein resides in the vacuole membrane. Its function is as follows. Efflux transporter. Confers resistance to a variety of toxic compounds. The protein is Multidrug resistance protein fnx1 (fnx1) of Schizosaccharomyces pombe (strain 972 / ATCC 24843) (Fission yeast).